We begin with the raw amino-acid sequence, 54 residues long: Putative collagen-like domain-containing protein 065L (54 aa).

Positions 1 to 54 (MRGLEAPGAVGPTGPSGAPGSQGPDGDVGGMGPEGPKGDDGPVGPKGPQGAAIF) are disordered. One can recognise a Collagen-like domain in the interval 7 to 51 (PGAVGPTGPSGAPGSQGPDGDVGGMGPEGPKGDDGPVGPKGPQGA). Gly residues predominate over residues 26–35 (GDVGGMGPEG). The segment covering 42 to 54 (PVGPKGPQGAAIF) has biased composition (low complexity).

This chain is Putative collagen-like domain-containing protein 065L, found in Dryophytes versicolor (chameleon treefrog).